Reading from the N-terminus, the 284-residue chain is Acetylglutamate kinase (284 aa).

Substrate-binding positions include 66 to 67 (GG), R88, and N179.

The protein belongs to the acetylglutamate kinase family. ArgB subfamily.

The protein resides in the cytoplasm. The catalysed reaction is N-acetyl-L-glutamate + ATP = N-acetyl-L-glutamyl 5-phosphate + ADP. It functions in the pathway amino-acid biosynthesis; L-arginine biosynthesis; N(2)-acetyl-L-ornithine from L-glutamate: step 2/4. In terms of biological role, catalyzes the ATP-dependent phosphorylation of N-acetyl-L-glutamate. This Actinobacillus pleuropneumoniae serotype 3 (strain JL03) protein is Acetylglutamate kinase.